Consider the following 150-residue polypeptide: Ribonuclease K6 (150 aa).

Residues 1–23 (MVLCFPLLLLLLVLWGPVCPLHA) form the signal peptide. The Proton acceptor role is filled by His38. Intrachain disulfides connect Cys46–Cys104, Cys60–Cys114, Cys78–Cys129, and Cys85–Cys92. Substrate contacts are provided by residues 61–65 (KHQNT) and Lys86. An N-linked (GlcNAc...) asparagine glycan is attached at Asn100. Arg105 is a binding site for substrate. Residue His145 is the Proton donor of the active site.

It belongs to the pancreatic ribonuclease family. In terms of assembly, interacts (via N-terminus) with bacterial lipopolysaccharide (LPS).

The protein resides in the secreted. The protein localises to the lysosome. It is found in the cytoplasmic granule. Ribonuclease which shows a preference for the pyrimidines uridine and cytosine. Has potent antibacterial activity against a range of Gram-positive and Gram-negative bacteria, including P.aeruginosa, A.baumanii, M.luteus, S.aureus, E.faecalis, E.faecium, S.saprophyticus and E.coli. Causes loss of bacterial membrane integrity, and also promotes agglutination of Gram-negative bacteria. Probably contributes to urinary tract sterility. Bactericidal activity is independent of RNase activity. The polypeptide is Ribonuclease K6 (RNASE6) (Pan troglodytes (Chimpanzee)).